Reading from the N-terminus, the 258-residue chain is Ribosomal RNA large subunit methyltransferase E (258 aa).

S-adenosyl-L-methionine-binding residues include G58, W60, D78, D96, and D120. K160 acts as the Proton acceptor in catalysis.

It belongs to the class I-like SAM-binding methyltransferase superfamily. RNA methyltransferase RlmE family.

The protein localises to the cytoplasm. It catalyses the reaction uridine(2552) in 23S rRNA + S-adenosyl-L-methionine = 2'-O-methyluridine(2552) in 23S rRNA + S-adenosyl-L-homocysteine + H(+). Specifically methylates the uridine in position 2552 of 23S rRNA at the 2'-O position of the ribose in the fully assembled 50S ribosomal subunit. This is Ribosomal RNA large subunit methyltransferase E from Methanococcus maripaludis (strain C7 / ATCC BAA-1331).